A 359-amino-acid polypeptide reads, in one-letter code: 3-dehydroquinate synthase (359 aa).

Residues 105–109 (GVVGD), 129–130 (TT), Lys142, Lys151, and 169–172 (TIKT) contribute to the NAD(+) site. Glu184, His247, and His263 together coordinate Zn(2+).

It belongs to the sugar phosphate cyclases superfamily. Dehydroquinate synthase family. Co(2+) serves as cofactor. It depends on Zn(2+) as a cofactor. NAD(+) is required as a cofactor.

The protein resides in the cytoplasm. It carries out the reaction 7-phospho-2-dehydro-3-deoxy-D-arabino-heptonate = 3-dehydroquinate + phosphate. Its pathway is metabolic intermediate biosynthesis; chorismate biosynthesis; chorismate from D-erythrose 4-phosphate and phosphoenolpyruvate: step 2/7. Its function is as follows. Catalyzes the conversion of 3-deoxy-D-arabino-heptulosonate 7-phosphate (DAHP) to dehydroquinate (DHQ). This chain is 3-dehydroquinate synthase, found in Ruminiclostridium cellulolyticum (strain ATCC 35319 / DSM 5812 / JCM 6584 / H10) (Clostridium cellulolyticum).